Here is a 687-residue protein sequence, read N- to C-terminus: Polyphosphate kinase (687 aa).

Residue Asn45 coordinates ATP. Mg(2+) is bound by residues Arg375 and Arg405. The active-site Phosphohistidine intermediate is the His435. The ATP site is built by Tyr472, Arg568, and His596.

Belongs to the polyphosphate kinase 1 (PPK1) family. It depends on Mg(2+) as a cofactor. An intermediate of this reaction is the autophosphorylated ppk in which a phosphate is covalently linked to a histidine residue through a N-P bond.

The enzyme catalyses [phosphate](n) + ATP = [phosphate](n+1) + ADP. Functionally, catalyzes the reversible transfer of the terminal phosphate of ATP to form a long-chain polyphosphate (polyP). The sequence is that of Polyphosphate kinase from Burkholderia multivorans (strain ATCC 17616 / 249).